A 1224-amino-acid polypeptide reads, in one-letter code: MSILSENNPTPTSITDPNESSHLHNPELNSGTRVASGPGPGPEVESTPLAPPTEVMNTTSANTSSLSLGSPMHEKIKQFDQDEVDTGETNDRTIDSGSGDIDDSQQSHNNNNNESNPESSEADDEKTQGMPPRMPGTFNVKGLHQGDDSDNEKQYTELTKSINKRTSKDSYSLGTLESPGTLNALETNNVSPAVIEEEQHTSSLEDLSLSLQHQNENARLSAPRSAPPQVPTSKTSSFHDMSSVISSSTSVHKIPSNPTSTRGSHLSSYKSTLDPGKPAQAAAPPPPEIDIDNLLTKSELDSETDTLSSATNSPNLLRNDTLQGIPTRDDENIDDSPRQLSQNTSATSRNTSGTSTSTVVKNSRSGTSKSTSTSTAHNQTAAITPIIPSHNKFHQQVINTNATNSSSSLEPLGVGINSNSSPKSGKKRKSGSKVRGVFSSMFGKNKSTSSSSSSNSGSNSHSQEVNIKISTPFNAKHLAHVGIDDNGSYTGLPIEWERLLSASGITKKEQQQHPQAVMDIVAFYQDTSENPDDAAFKKFHFDNNKSSSSGWSNENTPPATPGGSNSGSGSGGGGAPSSPHRTPPSSIIEKNNVEQKVITPSQSMPTKTESKQSENQHPHEDNATQYTPRTPTSHVQEGQFIPSRPAPKPPSTPLSSMSVSHKTPSSQSLPRSDSQSDIRSSTPKSHQDVSPSKIKIRSISSKSLKSMRSRKSGDKFTHIAPAPPPPSLPSIPKSKSHSASLSSQLRPATNGSTTAPIPASAAFGGENNALPKQRINEFKAHRAPPPPPSAPPAPPVPPAPPANLLSEQTSEIPQQRTAPSQALADVTAPTNIYEIQQTKYQEAQQKLREKKARELEEIQRLREKNERQNRQQETGQNNADTASGGSNIAPPVPVPNKKPPSGSGGGRDAKQAALIAQKKREEKKRKNLQIIAKLKTICNPGDPNELYVDLVKIGQGASGGVFLAHDVRDKSNIVAIKQMNLEQQPKKELIINEILVMKGSSHPNIVNFIDSYLLKGDLWVIMEYMEGGSLTDIVTHSVMTEGQIGVVCRETLKGLKFLHSKGVIHRDIKSDNILLNMDGNIKITDFGFCAQINEINSKRITMVGTPYWMAPEIVSRKEYGPKVDVWSLGIMIIEMLEGEPPYLNETPLRALYLIATNGTPKLKDPESLSYDIRKFLAWCLQVDFNKRADADELLHDNFITECDDVSSLSPLVKIARLKKMSESD.

Over residues 1–18 (MSILSENNPTPTSITDPN) the composition is skewed to polar residues. 2 disordered regions span residues 1–378 (MSIL…TAHN) and 403–464 (TNSS…HSQE). Low complexity-rich tracts occupy residues 57–70 (NTTS…SLGS) and 95–119 (DSGS…NPES). The span at 144 to 155 (HQGDDSDNEKQY) shows a compositional bias: basic and acidic residues. Polar residues-rich tracts occupy residues 169–191 (DSYS…NNVS), 201–218 (TSSL…NENA), and 231–240 (PTSKTSSFHD). The span at 242-251 (SSVISSSTSV) shows a compositional bias: low complexity. Polar residues-rich tracts occupy residues 256–271 (SNPT…SYKS) and 305–324 (DTLS…TLQG). Composition is skewed to low complexity over residues 343-375 (NTSA…STST) and 433-462 (KVRG…NSHS). Residues 469-482 (ISTPFNAKHLAHVG) enclose the CRIB domain. 2 disordered regions span residues 539–825 (FHFD…ALAD) and 861–913 (LREK…KQAA). Over residues 544-555 (NKSSSSGWSNEN) the composition is skewed to polar residues. Residues 564–575 (SNSGSGSGGGGA) are compositionally biased toward gly residues. A compositionally biased stretch (polar residues) spans 598 to 607 (ITPSQSMPTK). Over residues 608 to 622 (TESKQSENQHPHEDN) the composition is skewed to basic and acidic residues. A compositionally biased stretch (polar residues) spans 623–636 (ATQYTPRTPTSHVQ). Composition is skewed to low complexity over residues 664 to 677 (PSSQ…SQSD), 690 to 704 (SPSK…SKSL), and 730 to 743 (SIPK…SLSS). Residues 744–755 (QLRPATNGSTTA) are compositionally biased toward polar residues. The span at 783-801 (APPPPPSAPPAPPVPPAPP) shows a compositional bias: pro residues. Over residues 805-820 (LSEQTSEIPQQRTAPS) the composition is skewed to polar residues. Over residues 861–870 (LREKNERQNR) the composition is skewed to basic and acidic residues. The span at 871 to 886 (QQETGQNNADTASGGS) shows a compositional bias: polar residues. The region spanning 947-1199 (YVDLVKIGQG…ADELLHDNFI (253 aa)) is the Protein kinase domain. ATP contacts are provided by residues 953 to 961 (IGQGASGGV) and Lys-977. Catalysis depends on Asp-1067, which acts as the Proton acceptor.

Belongs to the protein kinase superfamily. STE Ser/Thr protein kinase family. STE20 subfamily.

The protein localises to the cytoplasm. Its subcellular location is the nucleus. It catalyses the reaction L-seryl-[protein] + ATP = O-phospho-L-seryl-[protein] + ADP + H(+). The enzyme catalyses L-threonyl-[protein] + ATP = O-phospho-L-threonyl-[protein] + ADP + H(+). In terms of biological role, MAP4K component of the MAPK pathway required for the mating pheromone response, and the regulation of cell polarity and cell cycle. Phosphorylates histone H2B to form H2BS10ph. Required for hyphal formation and virulence. This Candida albicans (strain WO-1) (Yeast) protein is Serine/threonine-protein kinase CST20 (CST20).